The chain runs to 374 residues: Type IV secretion system protein PtlG homolog (374 aa).

A helical membrane pass occupies residues 38–56 (WMFALVAVALSCLLATGIW). The interval 86–117 (HPREPEPAPLPDMPAAPDPILPQPRPAPPVPP) is disordered. Residues 92-117 (PAPLPDMPAAPDPILPQPRPAPPVPP) show a composition bias toward pro residues.

Belongs to the TrbI/VirB10 family.

It localises to the cell membrane. This chain is Type IV secretion system protein PtlG homolog (ptlG), found in Bordetella bronchiseptica (strain ATCC BAA-588 / NCTC 13252 / RB50) (Alcaligenes bronchisepticus).